A 430-amino-acid chain; its full sequence is Serine--tRNA ligase (430 aa).

237-239 (TAE) lines the L-serine pocket. 268 to 270 (RSE) provides a ligand contact to ATP. L-serine is bound at residue E291. 355–358 (EISS) provides a ligand contact to ATP. Residue S391 coordinates L-serine.

The protein belongs to the class-II aminoacyl-tRNA synthetase family. Type-1 seryl-tRNA synthetase subfamily. Homodimer. The tRNA molecule binds across the dimer.

The protein localises to the cytoplasm. It catalyses the reaction tRNA(Ser) + L-serine + ATP = L-seryl-tRNA(Ser) + AMP + diphosphate + H(+). The catalysed reaction is tRNA(Sec) + L-serine + ATP = L-seryl-tRNA(Sec) + AMP + diphosphate + H(+). The protein operates within aminoacyl-tRNA biosynthesis; selenocysteinyl-tRNA(Sec) biosynthesis; L-seryl-tRNA(Sec) from L-serine and tRNA(Sec): step 1/1. Functionally, catalyzes the attachment of serine to tRNA(Ser). Is also able to aminoacylate tRNA(Sec) with serine, to form the misacylated tRNA L-seryl-tRNA(Sec), which will be further converted into selenocysteinyl-tRNA(Sec). In Shigella boydii serotype 18 (strain CDC 3083-94 / BS512), this protein is Serine--tRNA ligase.